The sequence spans 490 residues: Gallate decarboxylase (490 aa).

Asp-165 contributes to the Mn(2+) binding site. Residues 168-170 (IHR) and Gly-187 contribute to the prenylated FMN site. A Mn(2+)-binding site is contributed by Glu-233. Catalysis depends on Glu-289, which acts as the Proton acceptor.

The protein belongs to the UbiD family. The cofactor is prenylated FMN. Mn(2+) is required as a cofactor.

It catalyses the reaction 3,4,5-trihydroxybenzoate + H(+) = 1,2,3-trihydroxybenzene + CO2. The enzyme catalyses 3,4-dihydroxybenzoate + H(+) = catechol + CO2. Functionally, involved in tannin degradation. Catalyzes the decarboxylation of gallic acid and protocatechuic acid to pyrogallol and catechol, respectively. This is Gallate decarboxylase from Lactiplantibacillus plantarum (strain ATCC BAA-793 / NCIMB 8826 / WCFS1) (Lactobacillus plantarum).